Reading from the N-terminus, the 180-residue chain is Protein GrpE (180 aa).

Over residues 1 to 19 (MAEKKRAQEQEKVQEDQKM) the composition is skewed to basic and acidic residues. The segment at 1–25 (MAEKKRAQEQEKVQEDQKMQNEQNE) is disordered.

Belongs to the GrpE family. In terms of assembly, homodimer.

Its subcellular location is the cytoplasm. In terms of biological role, participates actively in the response to hyperosmotic and heat shock by preventing the aggregation of stress-denatured proteins, in association with DnaK and GrpE. It is the nucleotide exchange factor for DnaK and may function as a thermosensor. Unfolded proteins bind initially to DnaJ; upon interaction with the DnaJ-bound protein, DnaK hydrolyzes its bound ATP, resulting in the formation of a stable complex. GrpE releases ADP from DnaK; ATP binding to DnaK triggers the release of the substrate protein, thus completing the reaction cycle. Several rounds of ATP-dependent interactions between DnaJ, DnaK and GrpE are required for fully efficient folding. The sequence is that of Protein GrpE from Nitratiruptor sp. (strain SB155-2).